The primary structure comprises 577 residues: Jasmonoyl--L-amino acid synthetase JAR4 (577 aa).

Ser-99 contacts ATP. Ser-102 contacts jasmonate. Residues Met-119, Thr-122, Gly-163, Asn-168, and 331-336 contribute to the ATP site; that span reads GSSEGW. 166–170 contributes to the an L-alpha-amino acid binding site; the sequence is TTNVY. Residue 328–331 participates in jasmonate binding; it reads ADYG. 531–535 lines the an L-alpha-amino acid pocket; it reads KILDH.

The protein belongs to the IAA-amido conjugating enzyme family.

It catalyses the reaction a jasmonate + an L-alpha-amino acid + ATP = a jasmonyl-L-amino acid + AMP + diphosphate + H(+). Catalyzes the synthesis of jasmonate-amino acid conjugates by adenylation. Catalyzes the conjugation of jasmonate (JA) to Ile, Leu and Val. Catalyzes the conjugation of jasmonate (JA) to Ile to mediate defense signaling and resistance to the herbivore Manduca sexta caterpillars. In Nicotiana attenuata (Coyote tobacco), this protein is Jasmonoyl--L-amino acid synthetase JAR4.